Reading from the N-terminus, the 168-residue chain is Photosystem I assembly protein Ycf3 (168 aa).

TPR repeat units follow at residues 35-68 (AFTY…EIDP), 72-105 (SYIL…NPFL), and 120-153 (GEQA…TPGN).

This sequence belongs to the Ycf3 family.

It is found in the plastid. The protein resides in the chloroplast thylakoid membrane. In terms of biological role, essential for the assembly of the photosystem I (PSI) complex. May act as a chaperone-like factor to guide the assembly of the PSI subunits. In Nandina domestica (Heavenly bamboo), this protein is Photosystem I assembly protein Ycf3.